The following is a 56-amino-acid chain: MSKTIVRKNESIDDALRRFKRAVSKTGTLQEVRKREFYEKPSVRRKKKSEAARKRK.

This sequence belongs to the bacterial ribosomal protein bS21 family.

The protein is Small ribosomal subunit protein bS21 (rpsU) of Geobacillus stearothermophilus (Bacillus stearothermophilus).